Here is a 50-residue protein sequence, read N- to C-terminus: Large ribosomal subunit protein eL39 (50 aa).

Belongs to the eukaryotic ribosomal protein eL39 family.

The polypeptide is Large ribosomal subunit protein eL39 (rpl39e) (Archaeoglobus fulgidus (strain ATCC 49558 / DSM 4304 / JCM 9628 / NBRC 100126 / VC-16)).